The following is a 932-amino-acid chain: 3-hydroxy-3-methylglutaryl-coenzyme A reductase (932 aa).

Transmembrane regions (helical) follow at residues 20–40 (VIVCTLTLTICMLSMNYFTGL), 59–79 (LSSDVLVMCIMRTLAVAYLYL), 92–112 (ILGIAGLFTIFSSFLFSSAVI), 113–133 (HLFGLELTGLNEALPFFLLLI), 162–182 (MAILGPTITLDTVVTTLVISI), and 193–213 (VFCCFGILSLIANYFVFMTFF). Residue asparagine 279 is glycosylated (N-linked (GlcNAc...) asparagine). Residues 322–342 (ILTAILATVLASHYIFFSDLA) form a helical membrane-spanning segment. The linker stretch occupies residues 343 to 467 (TYPEKRVSIM…APRPMPELLE (125 aa)). The span at 357 to 367 (VVNPGSDHEDA) shows a compositional bias: basic and acidic residues. A disordered region spans residues 357 to 442 (VVNPGSDHED…SGSEDEEEEV (86 aa)). Polar residues predominate over residues 374–403 (GTLSSSPSTSDVRVIESMTSRTQACQTDPV). A compositionally biased stretch (low complexity) spans 406 to 421 (SPRNSRSSSPVSSHSV). The segment at 468-932 (ILNVGKGPNA…APGTCTANAS (465 aa)) is catalytic. Residues glutamate 575, lysine 707, and aspartate 783 each act as charge relay system in the active site. Asparagine 850 carries an N-linked (GlcNAc...) asparagine glycan. The active-site Proton donor is histidine 882. The N-linked (GlcNAc...) asparagine glycan is linked to asparagine 886. Residue serine 888 is modified to Phosphoserine; by AMPK.

The protein belongs to the HMG-CoA reductase family.

Its subcellular location is the endoplasmic reticulum membrane. It carries out the reaction (R)-mevalonate + 2 NADP(+) + CoA = (3S)-3-hydroxy-3-methylglutaryl-CoA + 2 NADPH + 2 H(+). Its pathway is metabolic intermediate biosynthesis; (R)-mevalonate biosynthesis; (R)-mevalonate from acetyl-CoA: step 3/3. In terms of biological role, this transmembrane glycoprotein is involved in the control of cholesterol biosynthesis. It is the rate-limiting enzyme of sterol biosynthesis. In Strongylocentrotus purpuratus (Purple sea urchin), this protein is 3-hydroxy-3-methylglutaryl-coenzyme A reductase (HMGCR).